Consider the following 497-residue polypeptide: Serine carboxypeptidase-like 20 (497 aa).

Residues 1–29 (MSIITMVWLMKVFVFVTLLSLVFVITESA) form the signal peptide. Disulfide bonds link Cys-90–Cys-386, Cys-254–Cys-266, and Cys-289–Cys-353. N-linked (GlcNAc...) asparagine glycans are attached at residues Asn-111 and Asn-146. Ser-186 is a catalytic residue. Residue Asn-249 is glycosylated (N-linked (GlcNAc...) asparagine). Residue Asn-405 is glycosylated (N-linked (GlcNAc...) asparagine). Residue Asp-421 is part of the active site. The N-linked (GlcNAc...) asparagine glycan is linked to Asn-463. Residue His-474 is part of the active site. A Microbody targeting signal motif is present at residues 495–497 (SKI).

The protein belongs to the peptidase S10 family. In terms of tissue distribution, ubiquitous.

It localises to the secreted. Probable carboxypeptidase. The protein is Serine carboxypeptidase-like 20 (SCPL20) of Arabidopsis thaliana (Mouse-ear cress).